The chain runs to 790 residues: Penicillin-binding protein 1A (790 aa).

Residues 1 to 20 (MANVRKRRKKKNEHKALRLT) are Cytoplasmic-facing. Residues 21-41 (FITLLMVFLFSCVAAAGVGLA) form a helical; Signal-anchor for type II membrane protein membrane-spanning segment. The Extracellular portion of the chain corresponds to 42 to 790 (MIKAAPPLDV…RKRKMIKPQI (749 aa)). The transglycosylase stretch occupies residues 61 to 230 (SVIYDDKNKL…PQSPSTFYNA (170 aa)). Residue Glu-100 is the Proton donor; for transglycosylase activity of the active site. Residues 363–656 (ASVSIVDYKT…AALIWKLIMG (294 aa)) are transpeptidase. Ser-402 acts as the Acyl-ester intermediate; for transpeptidase activity in catalysis. Positions 720 to 790 (NKDKDDDDDD…RKRKMIKPQI (71 aa)) are disordered. Residues 724–740 (DDDDDDKDKDKEDEEEN) show a composition bias toward acidic residues. Positions 741–779 (KDEKNEDKKEAKDNTKNKDKDKKKDNDRKIDMDKKPDSS) are enriched in basic and acidic residues. Residues 780–790 (KRKRKMIKPQI) show a composition bias toward basic residues.

The protein in the N-terminal section; belongs to the glycosyltransferase 51 family. It in the C-terminal section; belongs to the transpeptidase family.

Its subcellular location is the cell membrane. It catalyses the reaction [GlcNAc-(1-&gt;4)-Mur2Ac(oyl-L-Ala-gamma-D-Glu-L-Lys-D-Ala-D-Ala)](n)-di-trans,octa-cis-undecaprenyl diphosphate + beta-D-GlcNAc-(1-&gt;4)-Mur2Ac(oyl-L-Ala-gamma-D-Glu-L-Lys-D-Ala-D-Ala)-di-trans,octa-cis-undecaprenyl diphosphate = [GlcNAc-(1-&gt;4)-Mur2Ac(oyl-L-Ala-gamma-D-Glu-L-Lys-D-Ala-D-Ala)](n+1)-di-trans,octa-cis-undecaprenyl diphosphate + di-trans,octa-cis-undecaprenyl diphosphate + H(+). The catalysed reaction is Preferential cleavage: (Ac)2-L-Lys-D-Ala-|-D-Ala. Also transpeptidation of peptidyl-alanyl moieties that are N-acyl substituents of D-alanine.. Its pathway is cell wall biogenesis; peptidoglycan biosynthesis. Functionally, cell wall formation. Synthesis of cross-linked peptidoglycan from the lipid intermediates. The enzyme has a penicillin-insensitive transglycosylase N-terminal domain (formation of linear glycan strands) and a penicillin-sensitive transpeptidase C-terminal domain (cross-linking of the peptide subunits). This chain is Penicillin-binding protein 1A (pbpA), found in Clostridium tetani (strain Massachusetts / E88).